The primary structure comprises 686 residues: L-type lectin-domain containing receptor kinase VII.1 (686 aa).

The first 20 residues, 1 to 20, serve as a signal peptide directing secretion; the sequence is MKALLFLLTLFLILPNPISA. The interval 21–256 is legume-lectin like; the sequence is IDFIFNGFND…SHKILAWSFS (236 aa). The Extracellular segment spans residues 21–286; it reads IDFIFNGFND…PKDSIVKAKW (266 aa). N-linked (GlcNAc...) asparagine glycosylation is found at asparagine 29, asparagine 34, asparagine 52, asparagine 64, asparagine 111, asparagine 123, asparagine 168, asparagine 203, asparagine 224, and asparagine 259. The helical transmembrane segment at 287 to 307 threads the bilayer; the sequence is FVFVLVLICFLVVALVGLVLF. Residues 308 to 686 lie on the Cytoplasmic side of the membrane; sequence AVVRKRLERA…SWNSSILEGR (379 aa). Residues 347–628 enclose the Protein kinase domain; sequence FDEKNVIGIG…VFEGDKAEIF (282 aa). Residues 353–361 and lysine 376 contribute to the ATP site; that span reads IGIGGNGKV. Residue aspartate 475 is the Proton acceptor of the active site.

The protein in the C-terminal section; belongs to the protein kinase superfamily. Ser/Thr protein kinase family. It in the N-terminal section; belongs to the leguminous lectin family.

The protein resides in the cell membrane. The enzyme catalyses L-seryl-[protein] + ATP = O-phospho-L-seryl-[protein] + ADP + H(+). It carries out the reaction L-threonyl-[protein] + ATP = O-phospho-L-threonyl-[protein] + ADP + H(+). In Arabidopsis thaliana (Mouse-ear cress), this protein is L-type lectin-domain containing receptor kinase VII.1 (LECRK71).